Consider the following 71-residue polypeptide: MLIITRKKDESLMIGDNIEITVLKLEDGSVKLGINAPRETTILRKELYEAVKQENKKAMNIDMNLLKGLKK.

The protein belongs to the CsrA/RsmA family. As to quaternary structure, homodimer; the beta-strands of each monomer intercalate to form a hydrophobic core, while the alpha-helices form wings that extend away from the core.

Its subcellular location is the cytoplasm. Functionally, a translational regulator that binds mRNA to regulate translation initiation and/or mRNA stability. Usually binds in the 5'-UTR at or near the Shine-Dalgarno sequence preventing ribosome-binding, thus repressing translation. Its main target seems to be the major flagellin gene, while its function is anatagonized by FliW. This chain is Translational regulator CsrA, found in Clostridium botulinum (strain Alaska E43 / Type E3).